Consider the following 49-residue polypeptide: Large ribosomal subunit protein uL16 (49 aa).

It belongs to the universal ribosomal protein uL16 family. Part of the 50S ribosomal subunit.

Functionally, binds 23S rRNA and is also seen to make contacts with the A and possibly P site tRNAs. This chain is Large ribosomal subunit protein uL16 (rplP), found in Aquifex pyrophilus.